The sequence spans 54 residues: Ribulose bisphosphate carboxylase large chain (54 aa).

Positions 1 to 2 (MS) are excised as a propeptide. At Pro-3 the chain carries N-acetylproline. Lys-14 is subject to N6,N6,N6-trimethyllysine.

It belongs to the RuBisCO large chain family. Type I subfamily. In terms of assembly, heterohexadecamer of 8 large chains and 8 small chains.

The protein resides in the plastid. It localises to the chloroplast. The enzyme catalyses 2 (2R)-3-phosphoglycerate + 2 H(+) = D-ribulose 1,5-bisphosphate + CO2 + H2O. The catalysed reaction is D-ribulose 1,5-bisphosphate + O2 = 2-phosphoglycolate + (2R)-3-phosphoglycerate + 2 H(+). Its function is as follows. RuBisCO catalyzes two reactions: the carboxylation of D-ribulose 1,5-bisphosphate, the primary event in carbon dioxide fixation, as well as the oxidative fragmentation of the pentose substrate in the photorespiration process. Both reactions occur simultaneously and in competition at the same active site. The protein is Ribulose bisphosphate carboxylase large chain (rbcL) of Icacina mannii.